Consider the following 920-residue polypeptide: Nitrate reductase [NADH] (920 aa).

The tract at residues 1-69 is disordered; that stretch reads MAASVENRQF…DTSDDEEDEA (69 aa). The segment covering 60 to 69 has biased composition (acidic residues); that stretch reads DTSDDEEDEA. Residue Cys-185 participates in Mo-molybdopterin binding. In terms of domain architecture, Cytochrome b5 heme-binding spans 534-609; that stretch reads SLTFTMSEVK…LEEYRVGELI (76 aa). Residues His-569 and His-592 each contribute to the heme site. The FAD-binding FR-type domain occupies 663–775; the sequence is REKIPCKLIS…KGPLGHIEYM (113 aa). FAD-binding positions include 715–718, 732–736, Phe-737, Phe-744, 749–751, and Thr-802; these read RAYT, LVKIY, and LMS.

It belongs to the nitrate reductase family. As to quaternary structure, homodimer. The cofactor is FAD. Heme serves as cofactor. Requires Mo-molybdopterin as cofactor. In cortical cells of roots grown at low nitrate concentrations, in vascular tissues of roots at high nitrate concentrations and in root apex under both conditions.

The catalysed reaction is nitrite + NAD(+) + H2O = nitrate + NADH + H(+). In terms of biological role, nitrate reductase is a key enzyme involved in the first step of nitrate assimilation in plants, fungi and bacteria. This is Nitrate reductase [NADH] (NIA) from Cichorium intybus (Chicory).